The following is a 251-amino-acid chain: YlmG homolog protein 2, chloroplastic (251 aa).

The N-terminal 51 residues, 1 to 51 (MEASANEPAMKSLKSNPSGPIPNFFVSLSSAFTQTPLVRSNKPNLLLLPPV), are a transit peptide targeting the chloroplast. Helical transmembrane passes span 119 to 139 (GFAA…NGLI) and 183 to 203 (FIPP…VLNA). The span at 232–243 (VRRRRLSSHKDH) shows a compositional bias: basic residues. The disordered stretch occupies residues 232-251 (VRRRRLSSHKDHRPSSASMT).

Belongs to the YggT family.

It localises to the plastid. The protein localises to the chloroplast thylakoid membrane. Its function is as follows. Not required for the biogenesis and accumulation of native cytochrome b6 in the thylakoid membrane. Not functionally involved in the pathway for covalent binding of the c-type heme to cytochrome b6. This chain is YlmG homolog protein 2, chloroplastic, found in Arabidopsis thaliana (Mouse-ear cress).